Reading from the N-terminus, the 173-residue chain is MVYFVSMMMIGLILGLMGVASNPSPYYAALGLVTAAGVGCGLLVSYGGSFMSLILFLIYLGGMLVVFAYTAALAAEPYPEAWGDWSVLMYVGIYLTGLVIAGKYFLVGKWGDSWAGVEELSSFEVVRGDFGGVALLYSLGGWMLVLSGWVLLVTLFVVLEVTRGLSWGTLRAV.

Transmembrane regions (helical) follow at residues 1–21 (MVYF…GVAS), 28–48 (AALG…SYGG), 53–73 (LILF…TAAL), 87–107 (VLMY…YFLV), and 139–159 (LGGW…FVVL).

The protein belongs to the complex I subunit 6 family.

It is found in the mitochondrion membrane. It carries out the reaction a ubiquinone + NADH + 5 H(+)(in) = a ubiquinol + NAD(+) + 4 H(+)(out). Core subunit of the mitochondrial membrane respiratory chain NADH dehydrogenase (Complex I) that is believed to belong to the minimal assembly required for catalysis. Complex I functions in the transfer of electrons from NADH to the respiratory chain. The immediate electron acceptor for the enzyme is believed to be ubiquinone. The sequence is that of NADH-ubiquinone oxidoreductase chain 6 (MT-ND6) from Scyliorhinus canicula (Small-spotted catshark).